The following is a 279-amino-acid chain: Tryptophan synthase alpha chain (279 aa).

Residues E50 and D61 each act as proton acceptor in the active site.

The protein belongs to the TrpA family. In terms of assembly, tetramer of two alpha and two beta chains.

It carries out the reaction (1S,2R)-1-C-(indol-3-yl)glycerol 3-phosphate + L-serine = D-glyceraldehyde 3-phosphate + L-tryptophan + H2O. It participates in amino-acid biosynthesis; L-tryptophan biosynthesis; L-tryptophan from chorismate: step 5/5. Its function is as follows. The alpha subunit is responsible for the aldol cleavage of indoleglycerol phosphate to indole and glyceraldehyde 3-phosphate. In Methylobacterium radiotolerans (strain ATCC 27329 / DSM 1819 / JCM 2831 / NBRC 15690 / NCIMB 10815 / 0-1), this protein is Tryptophan synthase alpha chain.